The following is a 669-amino-acid chain: Translation factor GUF1, mitochondrial (669 aa).

A mitochondrion-targeting transit peptide spans methionine 1–tyrosine 49. A tr-type G domain is found at glutamate 66 to lysine 247. GTP contacts are provided by residues alanine 75–serine 82, aspartate 140–histidine 144, and asparagine 194–aspartate 197.

It belongs to the TRAFAC class translation factor GTPase superfamily. Classic translation factor GTPase family. LepA subfamily.

It is found in the mitochondrion inner membrane. It carries out the reaction GTP + H2O = GDP + phosphate + H(+). Functionally, promotes mitochondrial protein synthesis. May act as a fidelity factor of the translation reaction, by catalyzing a one-codon backward translocation of tRNAs on improperly translocated ribosomes. Binds to mitochondrial ribosomes in a GTP-dependent manner. The chain is Translation factor GUF1, mitochondrial from Bos taurus (Bovine).